Consider the following 184-residue polypeptide: Elongation factor P 1 (184 aa).

Belongs to the elongation factor P family.

Its subcellular location is the cytoplasm. It participates in protein biosynthesis; polypeptide chain elongation. Its function is as follows. Involved in peptide bond synthesis. Stimulates efficient translation and peptide-bond synthesis on native or reconstituted 70S ribosomes in vitro. Probably functions indirectly by altering the affinity of the ribosome for aminoacyl-tRNA, thus increasing their reactivity as acceptors for peptidyl transferase. The chain is Elongation factor P 1 (efp1) from Protochlamydia amoebophila (strain UWE25).